The sequence spans 429 residues: 3-phosphoshikimate 1-carboxyvinyltransferase (429 aa).

3-phosphoshikimate contacts are provided by K23, S24, and R28. Residue K23 coordinates phosphoenolpyruvate. 2 residues coordinate phosphoenolpyruvate: G95 and R123. Residues S168, Q170, D316, and K343 each coordinate 3-phosphoshikimate. Residue Q170 coordinates phosphoenolpyruvate. D316 functions as the Proton acceptor in the catalytic mechanism. Positions 347 and 389 each coordinate phosphoenolpyruvate.

It belongs to the EPSP synthase family. As to quaternary structure, monomer.

It localises to the cytoplasm. It carries out the reaction 3-phosphoshikimate + phosphoenolpyruvate = 5-O-(1-carboxyvinyl)-3-phosphoshikimate + phosphate. The protein operates within metabolic intermediate biosynthesis; chorismate biosynthesis; chorismate from D-erythrose 4-phosphate and phosphoenolpyruvate: step 6/7. Its function is as follows. Catalyzes the transfer of the enolpyruvyl moiety of phosphoenolpyruvate (PEP) to the 5-hydroxyl of shikimate-3-phosphate (S3P) to produce enolpyruvyl shikimate-3-phosphate and inorganic phosphate. This is 3-phosphoshikimate 1-carboxyvinyltransferase from Bacillus thuringiensis subsp. konkukian (strain 97-27).